Here is a 203-residue protein sequence, read N- to C-terminus: Thymidylate kinase (203 aa).

10–17 (GIDGAGKS) is an ATP binding site.

Belongs to the thymidylate kinase family.

The enzyme catalyses dTMP + ATP = dTDP + ADP. Functionally, phosphorylation of dTMP to form dTDP in both de novo and salvage pathways of dTTP synthesis. This chain is Thymidylate kinase, found in Cupriavidus necator (strain ATCC 17699 / DSM 428 / KCTC 22496 / NCIMB 10442 / H16 / Stanier 337) (Ralstonia eutropha).